The following is a 149-amino-acid chain: Calmodulin (149 aa).

EF-hand domains lie at 8 to 43, 44 to 79, 81 to 116, and 117 to 149; these read EQIS…LGQN, PTEA…KMQD, DSEE…LGEK, and LTDE…MMSK. Ca(2+)-binding residues include Asp-21, Asp-23, Asp-25, Thr-27, Glu-32, Asp-57, Asp-59, Ser-61, Thr-63, Glu-68, Asp-94, Asp-96, Asn-98, and Glu-105. The residue at position 116 (Lys-116) is an N6,N6,N6-trimethyllysine. Residues Asp-130, Asp-132, Asp-134, Gln-136, and Glu-141 each coordinate Ca(2+).

The protein belongs to the calmodulin family.

Calmodulin mediates the control of a large number of enzymes, ion channels and other proteins by Ca(2+). Among the enzymes to be stimulated by the calmodulin-Ca(2+) complex are a number of protein kinases and phosphatases. This is Calmodulin from Trypanosoma brucei brucei.